The sequence spans 328 residues: Arylacetonitrilase (328 aa).

Positions 5–278 (VRVAVTQAEP…EGIIYADLDF (274 aa)) constitute a CN hydrolase domain. Glutamate 45 serves as the catalytic Proton acceptor. Residue lysine 125 is part of the active site. Residue cysteine 160 is the Nucleophile of the active site.

Belongs to the carbon-nitrogen hydrolase superfamily. Nitrilase family.

The enzyme catalyses a nitrile + 2 H2O = a carboxylate + NH4(+). It carries out the reaction 4-chlorophenylacetonitrile + 2 H2O = 4-chlorophenylacetate + NH4(+). Its function is as follows. Nitrilase that hydrolyzes preferentially phenylacetonitrile, (R,S)-mandelonitrile, and 3-indolylacetonitrile. In Aspergillus niger (strain ATCC MYA-4892 / CBS 513.88 / FGSC A1513), this protein is Arylacetonitrilase.